An 834-amino-acid chain; its full sequence is MTEEKKFSGSNRPARKQAVPERKELPASQRRHAAKLADGTTPAQGGSRPSRPARPNNNNQNRPNNGGQSQNRNNQNRSNTSTGGQNRSNNGGNRNNRPGSRVAPAEGRPMIREKKNWSTKPREGQVDYSAKPDNSLKQYVNENEKKRQASAAAKHPKKPAAATKPAVKKETSATKPATASTTTGAGKFGGALASGNNSARNNSRKRNTNGTGQQTPRRNDRPRGSKKSRRIAAKHQPSTPATVRKEQPLPAVLEYRVGMNVQDLSKLLHRDTAEIIKKLFLLGIVTNQNQSLDEDTIEILAADYGIEAQAKEEEDVADIDRFFDDENIDESKLVSRPPVVTIMGHVDHGKTTLLDYLRNSHVTEGEAGGITQHIGAYQTRINDKLITFLDTPGHAAFTEMRARGANVTDLTILVVAADDGVMPQTIEAINHAKAAGTPIIVAVNKIDKPGANPDDVMNQLMAYDLVPEEYGGDTIFVKISAKFGQNVDELLEMILLQAEVLELKANPNMPARGSVIEARLDKGRGPVSTVLVQQGTMHVGDPIVVGNTYGRVRTMTNERGVELSEALPATPIQITGLNGVPQAGDRFIVMADEKTARAAGEERAKRAQEAVRNSGSVVTLDTLFNTMAEKAMKTVPVIVKADVQGSVEALSGSLKKIEVDGVRVDIIHTAVGAINESDVTLAEASGAIIIGFNVRPTPLAKSQSDSEKVDIRFYNVIYNAIDDVEAAMKGQLEPVYEEKVIGKVEVKELFKFSKVGTIAGAMVEEGKITKDSKVRVIRDNVVVFDGEVGSLQRGKDAVNEVKMGFEFGFTVAKFNDVHAGDVVEAYVMEEVKPK.

Residues 1–247 (MTEEKKFSGS…STPATVRKEQ (247 aa)) form a disordered region. Residues 45 to 101 (GGSRPSRPARPNNNNQNRPNNGGQSQNRNNQNRSNTSTGGQNRSNNGGNRNNRPGSR) show a composition bias toward low complexity. Residues 109–125 (PMIREKKNWSTKPREGQ) show a composition bias toward basic and acidic residues. Low complexity-rich tracts occupy residues 149–165 (ASAAAKHPKKPAAATKP) and 173–201 (ATKPATASTTTGAGKFGGALASGNNSARN). Over residues 224–233 (GSKKSRRIAA) the composition is skewed to basic residues. The 170-residue stretch at 335–504 (SRPPVVTIMG…LLQAEVLELK (170 aa)) folds into the tr-type G domain. Positions 344 to 351 (GHVDHGKT) are G1. 344-351 (GHVDHGKT) provides a ligand contact to GTP. Residues 369–373 (GITQH) are G2. The tract at residues 390-393 (DTPG) is G3. Residues 390–394 (DTPGH) and 444–447 (NKID) each bind GTP. Residues 444-447 (NKID) form a G4 region. Positions 480-482 (SAK) are G5.

This sequence belongs to the TRAFAC class translation factor GTPase superfamily. Classic translation factor GTPase family. IF-2 subfamily.

It localises to the cytoplasm. Its function is as follows. One of the essential components for the initiation of protein synthesis. Protects formylmethionyl-tRNA from spontaneous hydrolysis and promotes its binding to the 30S ribosomal subunits. Also involved in the hydrolysis of GTP during the formation of the 70S ribosomal complex. This Leuconostoc mesenteroides subsp. mesenteroides (strain ATCC 8293 / DSM 20343 / BCRC 11652 / CCM 1803 / JCM 6124 / NCDO 523 / NBRC 100496 / NCIMB 8023 / NCTC 12954 / NRRL B-1118 / 37Y) protein is Translation initiation factor IF-2.